The sequence spans 303 residues: Siderophore enterobactin esterase (303 aa).

The protein belongs to the esterase D family. In terms of assembly, homodimer.

The catalysed reaction is enterobactin + 3 H2O = 3 N-(2,3-dihydroxybenzoyl)-L-serine + 2 H(+). Functionally, displays specific enterobactin (ENB) esterase activity required for intracellular release of iron. Enterobactin is a xenosiderophore that is selectively produced by Gram-negative Enterobacteriaceae. The affinity for enterobactin is quite high, potentially due to the low natural abundance of this xenosiderophore in fungal habitats. Does not hydrolyze triacetylfusarinine C (TAFC). The polypeptide is Siderophore enterobactin esterase (Emericella nidulans (strain FGSC A4 / ATCC 38163 / CBS 112.46 / NRRL 194 / M139) (Aspergillus nidulans)).